We begin with the raw amino-acid sequence, 923 residues long: MATEKGHGRDDEERVPLTRGSTEFRNSIDSFDYSSSTASLSLAVIDRINNSTQDAALGEKGPRDDDDDRYWDDDVEYDVEDADYIPSGGKPMHKSVKIALWTLLFLSLGGWSLAFVLFIFRSHDTYETPISSEDNISSGGLRGDRITLDDVLGEEWMPRHHFISWFPGPNGEDGLLLEKDGPGSTGYLRVEDIVSRKDTKSSKGSIVLMRKNTFTVGGETVICSQVWPSPDLKTVLVLSEKKQNWRHSFTGKYWLFDVDTQTGQPLDPAAQDQRIQLASWSPQSDAVVFTRDNNMFLRKLSSKEVTTITSDGGVDLFYGVPDWVYEEEVFSGNSATWWAHDGNYIAFLRTNESAVPEYPLQYFVSRPSGEDPNLGEENYPEVREIKYPKAGAPNPIVDLQFYDVRKGEIFSVDVADRFPDDNRLIIEVLWASNGKVLVRETNRESDILIIAAINVLSRTGKIVRKEDINALDGGWVEPTQSTRFIPADPSNGRPEDGYIDTVIHEGRDQLAYFTPLDNPEPLILTKGPSEVVNSPSGVDLKRGLVYFVVAGNEPWERHVYSVKFDGTALQPVTNVSESSYYDVSFSDGAGYALLNFQGPKVPWQKVISTPANENPFEEIIEQNNHLSRKLRLFSLESKVFQYINIDGFSLPVLERRPPNFDPTKKYPVLFYLYGGPGSQTVDKKFRVDFQSYVASTLGYIVVTVDGRGTGYIGRKSLSIVRGKLGHYEARDQIEVAKKWAAKPYVDESRMAIWGWSYGGFMTLKTIEEDGGRTFQYGMAVAPVTDWRYYDSIYAERYMHTPQHNPQGYDSSAISNTTALANNVRFLVMHGTADDNVHIQNTLTLLDKLDLANVDNYDVHVFPDSDHNINFHNAHKIVYTRLADWLVNAFNGQWLKTNNPTPNDSLFRRAATWAGLSYNFKHLH.

Basic and acidic residues predominate over residues 1–16 (MATEKGHGRDDEERVP). The segment at 1 to 21 (MATEKGHGRDDEERVPLTRGS) is disordered. Residues 1 to 99 (MATEKGHGRD…KPMHKSVKIA (99 aa)) lie on the Cytoplasmic side of the membrane. The helical; Signal-anchor for type II membrane protein transmembrane segment at 100-120 (LWTLLFLSLGGWSLAFVLFIF) threads the bilayer. Residues 121 to 923 (RSHDTYETPI…GLSYNFKHLH (803 aa)) are Vacuolar-facing. Asn135, Asn351, and Asn574 each carry an N-linked (GlcNAc...) asparagine glycan. Ser756 functions as the Charge relay system in the catalytic mechanism. Asn815 carries an N-linked (GlcNAc...) asparagine glycan. Active-site charge relay system residues include Asp833 and His866. Asn902 carries an N-linked (GlcNAc...) asparagine glycan.

It belongs to the peptidase S9B family.

The protein localises to the vacuole membrane. It carries out the reaction Release of an N-terminal dipeptide, Xaa-Yaa-|-Zaa-, from a polypeptide, preferentially when Yaa is Pro, provided Zaa is neither Pro nor hydroxyproline.. Its function is as follows. Type IV dipeptidyl-peptidase which removes N-terminal dipeptides sequentially from polypeptides having unsubstituted N-termini provided that the penultimate residue is proline. This is Probable dipeptidyl-aminopeptidase B (DAPB) from Ajellomyces capsulatus (strain G186AR / H82 / ATCC MYA-2454 / RMSCC 2432) (Darling's disease fungus).